Here is a 1388-residue protein sequence, read N- to C-terminus: DNA-directed RNA polymerase subunit beta'' (1388 aa).

The Zn(2+) site is built by C224, C294, C301, and C304.

Belongs to the RNA polymerase beta' chain family. RpoC2 subfamily. In terms of assembly, in plastids the minimal PEP RNA polymerase catalytic core is composed of four subunits: alpha, beta, beta', and beta''. When a (nuclear-encoded) sigma factor is associated with the core the holoenzyme is formed, which can initiate transcription. Requires Zn(2+) as cofactor.

Its subcellular location is the plastid. It localises to the chloroplast. The enzyme catalyses RNA(n) + a ribonucleoside 5'-triphosphate = RNA(n+1) + diphosphate. DNA-dependent RNA polymerase catalyzes the transcription of DNA into RNA using the four ribonucleoside triphosphates as substrates. In Phalaenopsis aphrodite subsp. formosana (Moth orchid), this protein is DNA-directed RNA polymerase subunit beta''.